Consider the following 953-residue polypeptide: MTPIAVTPVAPVDIIYDLKHTERATESSPVTLLDVFSRAVSQYPNHELSFITSSAHDSTIHTKTFAEFNQDVHALAQAMRAWGKPTGSVIVVYLTEHEDNMAAVWASLLAGYVPCLQPALSAQQAHKEGHVGHIKNLFSSATWLTNESGAEQVQSISGLDIHLLSELKASAEAGVDFQAHQPNSDDEAILFLTSGSTGFSKAVVHTHRTILAACHAKGESYGLTSESKIMNWVGFDHVAGSLEMHIAPLLYGASQLHVHASAILSDPLRFLHLIEEKSIQLAFAPNFLLAKLTRDLEKRSDLFGKFDLSSIKRINSGGEAVVSSTAQAFARTLKNLAKDGDASFVISAGFGMTETCAGCIYDPINVLETPPSYEFLELGTPVAGCEMRVVNPEDGVTPRPDGESGELQVRGPMVFVRYYNNPEATSSSFVEGGWYRTGDVGIVEQGKMRLSGRIKDTVIVHGVSYGIPELETYLQTVEGVTHSFLAAAPYRAPGQETEGFVVFYSPTFDLDSEDAPAKLFATHRALRDVSVKLITLPPQQIIPIPINQMEKTTLGKLSRARLVNLFKQGELAKHIDRAEELVSIARGASFVAPSTETEKTLAGIYAGIFNLSVGDMSASENFFELGGTSIDVIRLKREGESAFDLPEIPTIQILKHPVISSLAKYVDSLISKDASQEEYDPIVPLQLTGNKTPIFMVHPGVGEVLIFVNLAKYFQNERPFYALRARGFEPGHPFFTTMDEMVSSYAAAIKRTQAHGPYAIAGYSYGGVVAFEVAKRLEAMGDEVKFTGLINIPPHIADRMHEIDWTGGMLNLSYFLGLVSKQDANDLAPSMRPLTRKEQLEIVWKLSPPERLVELQLTPEKLDHWVDIAGSLIECGKTYEPASSVSVLDVFYAIPLRGSKEDWLNNQLKPWAGYSRAEPSYTDVPGQHYTLMDFDHVPGFQKIFRSRLEARGL.

The tract at residues Arg38–Val460 is adenylation (A) domain. Residues Ala592–Ile670 form the Carrier domain. The thiolation and peptide carrier (T) domain stretch occupies residues Thr597–Asp667. Ser629 carries the O-(pantetheine 4'-phosphoryl)serine modification. Residues Pro693 to His795 are thioesterase (TE) domain.

Belongs to the ATP-dependent AMP-binding enzyme family.

It participates in secondary metabolite biosynthesis. An L-tyrosine:2-oxoglutarate aminotransferase (probably invD) and atromentin synthetase invA2 catalyze consecutive steps to turn over L-tyrosine into atromentin, which represents the generic precursor molecule for the entire terphenylquinone and pulvinic acid family of pigments, which are widely distributed secondary metabolites in homobasidiomycetes. The first step catalyzed by the aminotransferase converts L-tyrosine in to 4-hydroxyphenylpyruvate (4-HPP). Adenylation of two 4-HPP monomers by the invA2 adenylation (A) domain, covalent tethering of the monomers as a thioester and oxoester onto the invA2 thiolation (T) and thioesterase (TE) domains, respectively, and symmetric C-C-bond formation between two monomers catalyzed by the invA2 TE domain leads to atromentin. In Paxillus involutus (Naked brimcap), this protein is Atromentin synthetase invA2 (invA2).